The following is a 196-amino-acid chain: Interleukin-18 (196 aa).

The propeptide occupies 1 to 29 (MSCEEIAVCAVRLRENLCLYFEELECDAF).

The protein belongs to the IL-1 family. As to quaternary structure, forms a ternary complex with ligand-binding receptor subunit IL18R1 and signaling receptor subunit IL18RAP at the plasma membrane. Mature IL18 first binds to IL18R1 forming a low affinity binary complex, which then interacts with IL18RAP to form a high affinity ternary complex that signals inside the cell. Interacts with cargo receptor TMED10; the interaction mediates the translocation from the cytoplasm into the ERGIC (endoplasmic reticulum-Golgi intermediate compartment) and thereby secretion. Post-translationally, the pro-IL-18 precursor is processed by CASP1 or CASP4 to yield the active form.

The protein resides in the cytoplasm. Its subcellular location is the secreted. Augments natural killer cell activity in spleen cells and stimulates interferon gamma production in T-helper type I cells. Involved in transduction of inflammation downstream of pyroptosis: its mature form is specifically released in the extracellular milieu by passing through the gasdermin-D (GSDMD) pore. This Gallus gallus (Chicken) protein is Interleukin-18 (IL18).